A 148-amino-acid chain; its full sequence is Ubiquitin-conjugating enzyme E2-16 kDa (148 aa).

Residues 2 to 148 (SSSKRIAKEL…AKEWTKKYAV (147 aa)) enclose the UBC core domain. The residue at position 12 (Ser-12) is a Phosphoserine. The active-site Glycyl thioester intermediate is Cys-86. Lys-91 is covalently cross-linked (Glycyl lysine isopeptide (Lys-Gly) (interchain with G-Cter in ubiquitin)).

This sequence belongs to the ubiquitin-conjugating enzyme family. Component of the RSP5-UBA1-UBC5 ubiquitin ligase complex composed of E3 RSP5, E1 UBA1 and E2 UBC5. The N-terminus is blocked.

It carries out the reaction S-ubiquitinyl-[E1 ubiquitin-activating enzyme]-L-cysteine + [E2 ubiquitin-conjugating enzyme]-L-cysteine = [E1 ubiquitin-activating enzyme]-L-cysteine + S-ubiquitinyl-[E2 ubiquitin-conjugating enzyme]-L-cysteine.. Its pathway is protein modification; protein ubiquitination. In terms of biological role, catalyzes the covalent attachment of ubiquitin to other proteins. Mediates the selective degradation of short-lived and abnormal proteins. The RSP5-UBA1-UBC5 ubiquitin ligase complex ubiquitinates RPO21 forming 'Lys-63'-linked polyubiquitin chains. This Saccharomyces cerevisiae (strain ATCC 204508 / S288c) (Baker's yeast) protein is Ubiquitin-conjugating enzyme E2-16 kDa (UBC5).